Consider the following 560-residue polypeptide: Putative transport protein PBPRA2420 (560 aa).

Transmembrane regions (helical) follow at residues 5–25, 37–57, 66–86, 91–111, and 161–181; these read VASL…AVGL, VGNS…GFTF, FMLF…GIFF, HYLL…LAMT, and SLSV…IFLA. 2 consecutive RCK C-terminal domains span residues 203 to 292 and 293 to 377; these read RGIG…FRNG and KEVF…IGFI. 6 consecutive transmembrane segments (helical) span residues 386–406, 409–429, 452–472, 477–497, 506–526, and 539–559; these read LLAF…TLAF, VAFG…LGFL, LMVF…DSFA, MVLV…YLFG, ALLF…DMIN, and AGTY…IIIM.

Belongs to the AAE transporter (TC 2.A.81) family. YbjL subfamily.

The protein resides in the cell membrane. The protein is Putative transport protein PBPRA2420 of Photobacterium profundum (strain SS9).